The following is a 75-amino-acid chain: Small ribosomal subunit protein bS18 (75 aa).

Belongs to the bacterial ribosomal protein bS18 family. As to quaternary structure, part of the 30S ribosomal subunit. Forms a tight heterodimer with protein bS6.

Functionally, binds as a heterodimer with protein bS6 to the central domain of the 16S rRNA, where it helps stabilize the platform of the 30S subunit. This chain is Small ribosomal subunit protein bS18, found in Paracoccus denitrificans (strain Pd 1222).